Reading from the N-terminus, the 318-residue chain is Ferrochelatase (318 aa).

His-186 and Glu-264 together coordinate Fe cation.

This sequence belongs to the ferrochelatase family.

It is found in the cytoplasm. It catalyses the reaction heme b + 2 H(+) = protoporphyrin IX + Fe(2+). It participates in porphyrin-containing compound metabolism; protoheme biosynthesis; protoheme from protoporphyrin-IX: step 1/1. Catalyzes the ferrous insertion into protoporphyrin IX. The protein is Ferrochelatase of Chlamydia caviae (strain ATCC VR-813 / DSM 19441 / 03DC25 / GPIC) (Chlamydophila caviae).